The following is a 1430-amino-acid chain: Death-associated protein kinase 1 (1430 aa).

One can recognise a Protein kinase domain in the interval 13–275 (YDTGEELGSG…IQDSLQHPWI (263 aa)). ATP is bound by residues 19–27 (LGSGQFAVV), Lys-42, 94–96 (ELV), and Glu-100. Catalysis depends on Asp-139, which acts as the Proton acceptor. Asp-161 is an ATP binding site. The interval 267–334 (QDSLQHPWIK…RSNMSVARSD (68 aa)) is calmodulin-binding. Ser-289 carries the post-translational modification Phosphoserine; by RPS6KA1 and RPS6KA3. The segment at 292–301 (NMEKFKKFAA) is autoinhibitory domain. Ser-308 bears the Phosphoserine; by autocatalysis mark. Phosphoserine occurs at positions 319 and 333. ANK repeat units follow at residues 378 to 407 (HGTP…RIDV), 411 to 440 (GGSN…PLDV), 444 to 473 (SGEM…NPNI), 477 to 506 (EEET…NVNI), 510 to 539 (EGET…DLNA), 543 to 572 (DGHI…FVDY), 576 to 605 (HGNT…NLDI), and 609 to 638 (YGRT…SVEA). In terms of domain architecture, Roc spans 681-955 (TQNLQPRIKL…NHLQEIRSQI (275 aa)). Phosphoserine; by MAPK1 is present on Ser-734. The stretch at 875 to 904 (KLKNPLQVVLVATHADIMNVPRPAGGEFGY) is one ANK 9 repeat. A Phosphoserine modification is found at Ser-1115. An ANK 10 repeat occupies 1162 to 1196 (EGDADIRLWVNGCKLANRGAELLVLLVNHGQGIEV). Positions 1312 to 1396 (KLSRLLDPPD…DAADFLLKAS (85 aa)) constitute a Death domain.

This sequence belongs to the protein kinase superfamily. CAMK Ser/Thr protein kinase family. DAP kinase subfamily. Interacts with KLHL20. Interacts (via death domain) with MAPK1 and MAPK3. Interacts with MAP1B (via N-terminus). Interacts with PRKD1 in an oxidative stress-regulated manner. Interacts with PIN1, PDCD6, BECN1, TSC2 and STX1A. Interacts (via kinase domain) with DAPK3 (via kinase domain). Interacts with GRINB. Interacts (via death domain) with UNC5B (via death domain). Interacts with UNC5C (via death domain). Mg(2+) is required as a cofactor. Post-translationally, ubiquitinated by the BCR(KLHL20) E3 ubiquitin ligase complex, leading to its degradation by the proteasome. In terms of processing, removal of the C-terminal tail of isoform 2 (corresponding to amino acids 296-337 of isoform 2) by proteolytic cleavage stimulates maximally its membrane-blebbing function. In response to mitogenic stimulation (PMA or EGF), phosphorylated at Ser-289; phosphorylation suppresses DAPK1 pro-apoptotic function. Autophosphorylation at Ser-308 inhibits its catalytic activity. Phosphorylation at Ser-734 by MAPK1 increases its catalytic activity and promotes cytoplasmic retention of MAPK1. Endoplasmic-stress can cause dephosphorylation at Ser-308. As to expression, isoform 2 is expressed in normal intestinal tissue as well as in colorectal carcinomas.

Its subcellular location is the cytoplasm. It localises to the cytoskeleton. It catalyses the reaction L-seryl-[protein] + ATP = O-phospho-L-seryl-[protein] + ADP + H(+). The catalysed reaction is L-threonyl-[protein] + ATP = O-phospho-L-threonyl-[protein] + ADP + H(+). Its activity is regulated as follows. Activated by Ca(2+)/calmodulin. Regulated by a locking mechanism, involving autophosphorylation at Ser-308 and calmodulin binding. In the inactive state, Ser-308 is phosphorylated. Activation involves its dephosphorylation and a release-of-autoinhibition mechanism where binding of calmodulin induces a conformational change that relieves the steric block of the active site by the autoinhibitory domain. Activity is modulated by UNC5B and NTN1. UNC5B activates it by inhibiting the phosphorylation at Ser-308, whereas NTN1 inhibits UNC5B-mediated activation of DAPK1. Endoplasmic-stress activates by causing Ser-308 dephosphorylation. Functionally, calcium/calmodulin-dependent serine/threonine kinase involved in multiple cellular signaling pathways that trigger cell survival, apoptosis, and autophagy. Regulates both type I apoptotic and type II autophagic cell deaths signal, depending on the cellular setting. The former is caspase-dependent, while the latter is caspase-independent and is characterized by the accumulation of autophagic vesicles. Phosphorylates PIN1 resulting in inhibition of its catalytic activity, nuclear localization, and cellular function. Phosphorylates TPM1, enhancing stress fiber formation in endothelial cells. Phosphorylates STX1A and significantly decreases its binding to STXBP1. Phosphorylates PRKD1 and regulates JNK signaling by binding and activating PRKD1 under oxidative stress. Phosphorylates BECN1, reducing its interaction with BCL2 and BCL2L1 and promoting the induction of autophagy. Phosphorylates TSC2, disrupting the TSC1-TSC2 complex and stimulating mTORC1 activity in a growth factor-dependent pathway. Phosphorylates RPS6, MYL9 and DAPK3. Acts as a signaling amplifier of NMDA receptors at extrasynaptic sites for mediating brain damage in stroke. Cerebral ischemia recruits DAPK1 into the NMDA receptor complex and it phosphorylates GRINB at Ser-1303 inducing injurious Ca(2+) influx through NMDA receptor channels, resulting in an irreversible neuronal death. Required together with DAPK3 for phosphorylation of RPL13A upon interferon-gamma activation which is causing RPL13A involvement in transcript-selective translation inhibition. Isoform 2 cannot induce apoptosis but can induce membrane blebbing. The chain is Death-associated protein kinase 1 (DAPK1) from Homo sapiens (Human).